A 256-amino-acid polypeptide reads, in one-letter code: Probable septum site-determining protein MinC (256 aa).

Residues 105 to 143 are disordered; sequence RRGATAKPEPADEAEPPVAAAAAEAVPEPAPELAPSAPT. Residues 120–142 are compositionally biased toward low complexity; sequence PPVAAAAAEAVPEPAPELAPSAP.

The protein belongs to the MinC family. Interacts with MinD and FtsZ.

Functionally, cell division inhibitor that blocks the formation of polar Z ring septums. Rapidly oscillates between the poles of the cell to destabilize FtsZ filaments that have formed before they mature into polar Z rings. Prevents FtsZ polymerization. The polypeptide is Probable septum site-determining protein MinC (Burkholderia vietnamiensis (strain G4 / LMG 22486) (Burkholderia cepacia (strain R1808))).